The sequence spans 642 residues: Threonine--tRNA ligase (642 aa).

In terms of domain architecture, TGS spans 1–61 (MPIITLPDGS…TADSELAIIT (61 aa)). Residues 243–534 (DHRKIGKQLD…LIEEYAGKFP (292 aa)) are catalytic. Residues C334, H385, and H511 each contribute to the Zn(2+) site.

This sequence belongs to the class-II aminoacyl-tRNA synthetase family. As to quaternary structure, homodimer. Zn(2+) is required as a cofactor.

The protein localises to the cytoplasm. The catalysed reaction is tRNA(Thr) + L-threonine + ATP = L-threonyl-tRNA(Thr) + AMP + diphosphate + H(+). Functionally, catalyzes the attachment of threonine to tRNA(Thr) in a two-step reaction: L-threonine is first activated by ATP to form Thr-AMP and then transferred to the acceptor end of tRNA(Thr). Also edits incorrectly charged L-seryl-tRNA(Thr). This chain is Threonine--tRNA ligase, found in Shewanella frigidimarina (strain NCIMB 400).